The primary structure comprises 512 residues: 2-isopropylmalate synthase (512 aa).

Positions valine 5 to tyrosine 267 constitute a Pyruvate carboxyltransferase domain. Aspartate 14, histidine 202, histidine 204, and asparagine 238 together coordinate Mn(2+). The tract at residues serine 391–valine 512 is regulatory domain.

Belongs to the alpha-IPM synthase/homocitrate synthase family. LeuA type 1 subfamily. As to quaternary structure, homodimer. It depends on Mn(2+) as a cofactor.

The protein localises to the cytoplasm. The catalysed reaction is 3-methyl-2-oxobutanoate + acetyl-CoA + H2O = (2S)-2-isopropylmalate + CoA + H(+). Its pathway is amino-acid biosynthesis; L-leucine biosynthesis; L-leucine from 3-methyl-2-oxobutanoate: step 1/4. Catalyzes the condensation of the acetyl group of acetyl-CoA with 3-methyl-2-oxobutanoate (2-ketoisovalerate) to form 3-carboxy-3-hydroxy-4-methylpentanoate (2-isopropylmalate). The chain is 2-isopropylmalate synthase from Heliobacterium modesticaldum (strain ATCC 51547 / Ice1).